We begin with the raw amino-acid sequence, 139 residues long: Cytochrome c-551 (139 aa).

The N-terminal stretch at 1-20 is a signal peptide; the sequence is MTRTLAVVLAMTFSAAPVFA. Heme c is bound by residues C34, C37, H38, and M116.

This sequence belongs to the cytochrome c family. Post-translationally, binds 1 heme c group covalently per subunit.

This is Cytochrome c-551 from Roseobacter denitrificans (strain ATCC 33942 / OCh 114) (Erythrobacter sp. (strain OCh 114)).